Reading from the N-terminus, the 618-residue chain is Protease 4 (618 aa).

Residues 1 to 24 (MRTLWRFIAGFFKWTWRVLNFVRE) are Cytoplasmic-facing. Residues 25 to 45 (MVLNLFFIFLVLVGVGIWMQI) form a helical membrane-spanning segment. At 46–618 (GNGSNSEQTA…AFCLTCANVR (573 aa)) the chain is on the periplasmic side. The Proton donor/acceptor role is filled by Lys209. Ser409 functions as the Nucleophile in the catalytic mechanism.

Belongs to the peptidase S49 family. In terms of assembly, homotetramer.

It localises to the cell inner membrane. Its function is as follows. Digests cleaved signal peptides in vitro, its in vivo function is unknown. This activity is necessary to maintain proper secretion of mature proteins across the membrane. The chain is Protease 4 (sppA) from Salmonella typhi.